A 258-amino-acid polypeptide reads, in one-letter code: Thrombin-like enzyme saxthrombin (258 aa).

Residues 1–18 form the signal peptide; that stretch reads MVLIRVLANLLILQLSYA. Positions 19–24 are excised as a propeptide; that stretch reads QKSSEL. In terms of domain architecture, Peptidase S1 spans 25–249; it reads VIGGDECNIN…YNHWIQSIIA (225 aa). Intrachain disulfides connect C31-C163, C50-C66, C98-C256, C142-C210, C174-C189, and C200-C225. N44 carries an N-linked (GlcNAc...) asparagine glycan. Residues H65 and D110 each act as charge relay system in the active site. S204 functions as the Charge relay system in the catalytic mechanism. A glycan (N-linked (GlcNAc...) asparagine) is linked at N251.

Belongs to the peptidase S1 family. Snake venom subfamily. Monomer. In terms of tissue distribution, expressed by the venom gland.

The protein localises to the secreted. In terms of biological role, thrombin-like snake venom serine protease that shows strong blood coagulation activity in vitro. The chain is Thrombin-like enzyme saxthrombin from Gloydius intermedius (Central Asian pit viper).